Here is a 106-residue protein sequence, read N- to C-terminus: Biogenesis of lysosome-related organelles complex 1 subunit 6 (106 aa).

The segment at 78-106 is disordered; it reads KKTSQLELSDTNIEDGSTTSTPTTTNKSQ. Positions 82-93 are enriched in polar residues; the sequence is QLELSDTNIEDG. Residues 94–106 show a composition bias toward low complexity; it reads STTSTPTTTNKSQ.

It belongs to the BLOC1S6 family. In terms of assembly, homodimer (isoform 1). Component of the biogenesis of lysosome-related organelles complex-1 (BLOC-1) composed at least of blos-1, blos-2, blos-4, dsbn-1, glo-2, mutd-1 and snpn-1. Isoform 1 interacts with blos-1 and blos-4.

The protein localises to the cytoplasm. It is found in the endosome. Functionally, component of the biogenesis of lysosome-related organelles complex-1 (BLOC-1) involved in gut granule biogenesis. The polypeptide is Biogenesis of lysosome-related organelles complex 1 subunit 6 (glo-2) (Caenorhabditis elegans).